The chain runs to 1078 residues: Zinc finger protein 827 (1078 aa).

Basic and acidic residues predominate over residues 1–10; the sequence is MPRRKQEQPK. Residues 1-14 form a mediates direct interaction with RBBP4 region; it reads MPRRKQEQPKRLPS. The interval 1-76 is disordered; the sequence is MPRRKQEQPK…PDTSLGSATP (76 aa). The RRK motif; mediates NuRD recruitment to telomeres motif lies at 3-5; the sequence is RRK. 2 stretches are compositionally biased toward polar residues: residues 33–42 and 62–76; these read YGNSSETPSE and EQSTSPDTSLGSATP. Glycyl lysine isopeptide (Lys-Gly) (interchain with G-Cter in SUMO2) cross-links involve residues K175, K215, and K225. The interval 307–341 is disordered; the sequence is SLLPDDPLPLPSSEKKPEKVTPPPPPPPPTAQPPQ. Positions 326–338 are enriched in pro residues; that stretch reads VTPPPPPPPPTAQ. Glycyl lysine isopeptide (Lys-Gly) (interchain with G-Cter in SUMO2) cross-links involve residues K357 and K369. 3 C2H2-type zinc fingers span residues 371 to 393, 399 to 421, and 430 to 452; these read FQCPICGLVIKRKSYWKRHMVIH, HQCPLCPFRCARKDNLKSHMKVH, and FQCQLCPFTSSRHFSLKLHMRCH. Glycyl lysine isopeptide (Lys-Gly) (interchain with G-Cter in SUMO2) cross-links involve residues K463, K472, K520, K546, K577, K584, and K594. The interval 466–490 is disordered; it reads IPDPDVKGSPHLSDSGCLGQQREGG. The segment at 594-640 is disordered; sequence KEEPKEEESLSMPLPRSSYVFSPEPEVSTPSVSEDPLTPQEGKGSVL. The span at 613–627 shows a compositional bias: low complexity; it reads VFSPEPEVSTPSVSE. Glycyl lysine isopeptide (Lys-Gly) (interchain with G-Cter in SUMO2) cross-links involve residues K636 and K655. K670 is covalently cross-linked (Glycyl lysine isopeptide (Lys-Gly) (interchain with G-Cter in SUMO1); alternate). Residue K670 forms a Glycyl lysine isopeptide (Lys-Gly) (interchain with G-Cter in SUMO2); alternate linkage. Residues K701, K707, K739, K775, and K795 each participate in a glycyl lysine isopeptide (Lys-Gly) (interchain with G-Cter in SUMO2) cross-link. C2H2-type zinc fingers lie at residues 814–836 and 842–864; these read FPCDVCGKVFGRQQTLSRHLSLH and YKCHLCPYAAKCRANLNQHLTVH. Glycyl lysine isopeptide (Lys-Gly) (interchain with G-Cter in SUMO2) cross-links involve residues K867 and K888. 2 consecutive C2H2-type zinc fingers follow at residues 894–916 and 926–949; these read YSCHVCGFETELNVQFVSHMSLH and ICCTACDFVTMEEAEIKTHIGTKH. Over residues 945–957 the composition is skewed to basic and acidic residues; sequence IGTKHTGDDRKTP. Positions 945 to 990 are disordered; sequence IGTKHTGDDRKTPSESNSPSSSSLSTLSDSANGKDDSDSSQKNKGG. K955 is covalently cross-linked (Glycyl lysine isopeptide (Lys-Gly) (interchain with G-Cter in SUMO2)). Low complexity predominate over residues 958-974; that stretch reads SESNSPSSSSLSTLSDS. Basic and acidic residues predominate over residues 976–985; that stretch reads NGKDDSDSSQ. Residue K1011 forms a Glycyl lysine isopeptide (Lys-Gly) (interchain with G-Cter in SUMO2) linkage. 2 consecutive C2H2-type zinc fingers follow at residues 1016–1038 and 1044–1066; these read FECVFCNFVCKTKNMFERHLQIH and FECDVCHKFMKTPEQLLEHKKCH.

Belongs to the krueppel C2H2-type zinc-finger protein family. In terms of assembly, part of a transcription inhibitory ribonucleoprotein complex composed at least of the circular RNA circZNF827, HNRNPK and HNRNPL. Interacts with the nucleosome remodeling and histone deacetylase/NuRD complex. Interacts with RBBP4; the interaction is direct and recruits RBBP4, a component of the NuRD complex, to telomeres.

The protein resides in the nucleus. The protein localises to the chromosome. It localises to the telomere. Functionally, as part of a ribonucleoprotein complex composed at least of HNRNPK, HNRNPL and the circular RNA circZNF827 that nucleates the complex on chromatin, may negatively regulate the transcription of genes involved in neuronal differentiation. Could also recruit the nucleosome remodeling and histone deacetylase/NuRD complex to telomeric regions of chromosomes to regulate chromatin remodeling as part of telomere maintenance. This chain is Zinc finger protein 827 (Znf827), found in Mus musculus (Mouse).